The chain runs to 234 residues: Segregation and condensation protein A (234 aa).

It belongs to the ScpA family. As to quaternary structure, component of a cohesin-like complex composed of ScpA, ScpB and the Smc homodimer, in which ScpA and ScpB bind to the head domain of Smc. The presence of the three proteins is required for the association of the complex with DNA.

The protein resides in the cytoplasm. In terms of biological role, participates in chromosomal partition during cell division. May act via the formation of a condensin-like complex containing Smc and ScpB that pull DNA away from mid-cell into both cell halves. This is Segregation and condensation protein A from Streptococcus pyogenes serotype M3 (strain ATCC BAA-595 / MGAS315).